The chain runs to 426 residues: Phosphoribosylamine--glycine ligase (426 aa).

The ATP-grasp domain maps to lysine 109–threonine 312. Leucine 138–serine 193 is an ATP binding site. Mg(2+)-binding residues include glutamate 282 and asparagine 284.

This sequence belongs to the GARS family. Mg(2+) is required as a cofactor. Mn(2+) serves as cofactor.

The catalysed reaction is 5-phospho-beta-D-ribosylamine + glycine + ATP = N(1)-(5-phospho-beta-D-ribosyl)glycinamide + ADP + phosphate + H(+). The protein operates within purine metabolism; IMP biosynthesis via de novo pathway; N(1)-(5-phospho-D-ribosyl)glycinamide from 5-phospho-alpha-D-ribose 1-diphosphate: step 2/2. This is Phosphoribosylamine--glycine ligase from Corynebacterium ammoniagenes (Brevibacterium ammoniagenes).